Consider the following 62-residue polypeptide: Photosystem II reaction center protein Z (62 aa).

The next 2 membrane-spanning stretches (helical) occupy residues 8 to 28 (TVLA…VIFA) and 41 to 61 (FSGA…NSFV).

It belongs to the PsbZ family. As to quaternary structure, PSII is composed of 1 copy each of membrane proteins PsbA, PsbB, PsbC, PsbD, PsbE, PsbF, PsbH, PsbI, PsbJ, PsbK, PsbL, PsbM, PsbT, PsbY, PsbZ, Psb30/Ycf12, at least 3 peripheral proteins of the oxygen-evolving complex and a large number of cofactors. It forms dimeric complexes.

The protein resides in the plastid. It localises to the chloroplast thylakoid membrane. May control the interaction of photosystem II (PSII) cores with the light-harvesting antenna, regulates electron flow through the 2 photosystem reaction centers. PSII is a light-driven water plastoquinone oxidoreductase, using light energy to abstract electrons from H(2)O, generating a proton gradient subsequently used for ATP formation. This Mesostigma viride (Green alga) protein is Photosystem II reaction center protein Z.